Reading from the N-terminus, the 1027-residue chain is Presequence protease, mitochondrial (1027 aa).

The transit peptide at 1 to 22 (MIRQCWAGLRLCRALYQTSYRW) directs the protein to the mitochondrion. H98 contacts Zn(2+). E101 (proton acceptor) is an active-site residue. Positions 102 and 199 each coordinate Zn(2+). A disulfide bond links C113 and C550. A disordered region spans residues 803-827 (RKAIRPHVVEKSSNPSPSGSEISRT). Residues 814–825 (SSNPSPSGSEIS) are compositionally biased toward low complexity.

This sequence belongs to the peptidase M16 family. PreP subfamily. As to quaternary structure, monomer and homodimer; homodimerization is induced by binding of the substrate. It depends on Zn(2+) as a cofactor. Post-translationally, a disulfide bond locks the enzyme in the closed conformation preventing substrate entry into the catalytic chamber.

It localises to the mitochondrion matrix. With respect to regulation, mainly exists in a closed and catalytically competent conformation but a closed-to-open switch allows substrate entry into the catalytic chamber. Substrate binding induces closure and dimerization. A disulfide bond may lock the enzyme in a closed conformation preventing substrate entry into the catalytic chamber, participating in redox regulation of the enzyme. Inhibited by metal-chelating agents. Inhibited by nickel and zinc excess, and slightly activated by manganese. Functionally, metalloendopeptidase of the mitochondrial matrix that functions in peptide cleavage and degradation rather than in protein processing. Has an ATP-independent activity. Specifically cleaves peptides in the range of 5 to 65 residues. Shows a preference for cleavage after small polar residues and before basic residues, but without any positional preference. Degrades the transit peptides of mitochondrial proteins after their cleavage. Also degrades other unstructured peptides. This is Presequence protease, mitochondrial (pitrm1) from Xenopus laevis (African clawed frog).